The sequence spans 382 residues: p21-activated protein kinase-interacting protein 1 (382 aa).

5 WD repeats span residues 37 to 77 (THHS…EHGA), 80 to 120 (HHAG…KTFK), 122 to 160 (HRGH…SAFI), 202 to 240 (TNGK…CLCE), and 243 to 284 (AHEN…KVPP). The segment at 313–382 (LPPAAEPCPD…MSEKKRKKKM (70 aa)) is disordered. Over residues 352 to 363 (DSKQPTKGNSPV) the composition is skewed to polar residues. Residues 365–382 (AKKRKMATMSEKKRKKKM) are compositionally biased toward basic residues.

Interacts with PAK1.

Its subcellular location is the nucleus. The protein resides in the nucleolus. Functionally, negatively regulates the PAK1 kinase. PAK1 is a member of the PAK kinase family, which has been shown to play a positive role in the regulation of signaling pathways involving MAPK8 and RELA. PAK1 exists as an inactive homodimer, which is activated by binding of small GTPases such as CDC42 to an N-terminal regulatory domain. PAK1IP1 also binds to the N-terminus of PAK1, and inhibits the specific activation of PAK1 by CDC42. May be involved in ribosomal large subunit assembly. The protein is p21-activated protein kinase-interacting protein 1 (Pak1ip1) of Mus musculus (Mouse).